The sequence spans 568 residues: Delta 8-(E)-sphingolipid desaturase (568 aa).

Positions 2-77 (DNIISRGEIE…FRKWRIGRID (76 aa)) constitute a Cytochrome b5 heme-binding domain. 2 residues coordinate heme: His-37 and His-60. 2 consecutive transmembrane segments (helical) span residues 241-261 (FWSA…AHDA) and 272-292 (LDNI…LGWW). The Histidine box-1 motif lies at 259-263 (HDAGH). A Histidine box-2 motif is present at residues 296–300 (HNVHH). A run of 3 helical transmembrane segments spans residues 352 to 377 (YLYY…LLGL), 389 to 409 (YFEL…LVGC), and 421 to 441 (IMVS…SHFA). Residues 480 to 484 (QVVHH) carry the Histidine box-3 motif. Positions 549 to 560 (ATGEREADEKTY) are enriched in basic and acidic residues. Positions 549 to 568 (ATGEREADEKTYRTKSIKNA) are disordered.

The protein belongs to the fatty acid desaturase type 1 family.

The protein localises to the membrane. The catalysed reaction is an N-acylsphing-4-enine + 2 Fe(II)-[cytochrome b5] + O2 + 2 H(+) = a (4E,8E)-4-sphinga-4,8-dienine ceramide + 2 Fe(III)-[cytochrome b5] + 2 H2O. Its pathway is lipid metabolism; sphingolipid metabolism. Functionally, delta(8)-fatty-acid desaturase which introduces a double bond at the 8-position in the long-chain base (LCB) of ceramides. Required for the formation of the di-unsaturated sphingoid base (E,E)-sphinga-4,8-dienine during glucosylceramide (GluCer) biosynthesis. This is Delta 8-(E)-sphingolipid desaturase from Lachancea kluyveri (strain ATCC 58438 / CBS 3082 / BCRC 21498 / NBRC 1685 / JCM 7257 / NCYC 543 / NRRL Y-12651) (Yeast).